The primary structure comprises 566 residues: Protein pacG (566 aa).

A DNA-binding region (NDT80) is located at residues 79 to 326; that stretch reads TSFDPPPPAE…RSPRNFQSRK (248 aa). Disordered stretches follow at residues 314-422 and 448-470; these read VRGR…EAHR and DSRP…DSGR. Residues 333 to 349 show a composition bias toward low complexity; the sequence is SAAASRKNAQAAAASNN. 3 stretches are compositionally biased toward polar residues: residues 365-391, 403-413, and 452-466; these read VKSS…ATNS, HSSVYSQSSPE, and HTSF…SLSV.

The protein localises to the nucleus. The protein resides in the cytoplasm. In terms of biological role, transcription factor that acts as a positive regulator of nonrepressible acid phosphatase activity. Is a major regulator of responses to nitrogen and carbon starvation and is essential for the expression of genes involved in vegetative incompatibility (like pin-c, het-6, and tol). Vegetative incompatibility is a non-self-recognition system ubiquitous in filamentous fungi which results in programmed cell death. This chain is Protein pacG (pacG), found in Emericella nidulans (strain FGSC A4 / ATCC 38163 / CBS 112.46 / NRRL 194 / M139) (Aspergillus nidulans).